A 509-amino-acid polypeptide reads, in one-letter code: Glycogen synthase (509 aa).

Lysine 47 serves as a coordination point for ADP-alpha-D-glucose.

Belongs to the glycosyltransferase 1 family. Bacterial/plant glycogen synthase subfamily.

The catalysed reaction is [(1-&gt;4)-alpha-D-glucosyl](n) + ADP-alpha-D-glucose = [(1-&gt;4)-alpha-D-glucosyl](n+1) + ADP + H(+). The protein operates within glycan biosynthesis; glycogen biosynthesis. Its function is as follows. Synthesizes alpha-1,4-glucan chains using ADP-glucose. The sequence is that of Glycogen synthase from Xanthomonas oryzae pv. oryzae (strain PXO99A).